Reading from the N-terminus, the 656-residue chain is Translation factor GUF1 homolog, mitochondrial (656 aa).

A tr-type G domain is found at 55-236 (QRIRNFSIIA…EIVRRLPPPD (182 aa)). Residues 64–71 (AHVDHGKS), 129–133 (DTPGH), and 183–186 (NKID) each bind GTP.

The protein belongs to the TRAFAC class translation factor GTPase superfamily. Classic translation factor GTPase family. LepA subfamily.

The protein localises to the mitochondrion inner membrane. The enzyme catalyses GTP + H2O = GDP + phosphate + H(+). Promotes mitochondrial protein synthesis. May act as a fidelity factor of the translation reaction, by catalyzing a one-codon backward translocation of tRNAs on improperly translocated ribosomes. Binds to mitochondrial ribosomes in a GTP-dependent manner. The protein is Translation factor GUF1 homolog, mitochondrial of Aedes aegypti (Yellowfever mosquito).